The chain runs to 507 residues: UDP-N-acetylmuramoyl-L-alanyl-D-glutamate--2,6-diaminopimelate ligase (507 aa).

Serine 32 provides a ligand contact to UDP-N-acetyl-alpha-D-muramoyl-L-alanyl-D-glutamate. Position 117–123 (glycine 117–threonine 123) interacts with ATP. Residues threonine 159–threonine 160, serine 186, glutamine 192, and arginine 194 contribute to the UDP-N-acetyl-alpha-D-muramoyl-L-alanyl-D-glutamate site. Lysine 226 is subject to N6-carboxylysine. Residues arginine 400, aspartate 424–arginine 427, glycine 475, and glutamate 479 contribute to the meso-2,6-diaminopimelate site. The Meso-diaminopimelate recognition motif motif lies at aspartate 424–arginine 427.

Belongs to the MurCDEF family. MurE subfamily. It depends on Mg(2+) as a cofactor. Post-translationally, carboxylation is probably crucial for Mg(2+) binding and, consequently, for the gamma-phosphate positioning of ATP.

Its subcellular location is the cytoplasm. It carries out the reaction UDP-N-acetyl-alpha-D-muramoyl-L-alanyl-D-glutamate + meso-2,6-diaminopimelate + ATP = UDP-N-acetyl-alpha-D-muramoyl-L-alanyl-gamma-D-glutamyl-meso-2,6-diaminopimelate + ADP + phosphate + H(+). It functions in the pathway cell wall biogenesis; peptidoglycan biosynthesis. Catalyzes the addition of meso-diaminopimelic acid to the nucleotide precursor UDP-N-acetylmuramoyl-L-alanyl-D-glutamate (UMAG) in the biosynthesis of bacterial cell-wall peptidoglycan. In Prochlorococcus marinus (strain MIT 9313), this protein is UDP-N-acetylmuramoyl-L-alanyl-D-glutamate--2,6-diaminopimelate ligase.